Here is a 413-residue protein sequence, read N- to C-terminus: Phosphoribosylamine--glycine ligase (413 aa).

Positions 108–310 (KQLMDKYRIP…LMQLIIDLEN (203 aa)) constitute an ATP-grasp domain. 134–190 (VETCDLPIVIKKDGLAAGKGVIIAFTREDALDGVKKIYQEEKGKVVFESYLEGEEFS) is a binding site for ATP. Mg(2+) is bound by residues Glu280 and Asn282.

This sequence belongs to the GARS family. It depends on Mg(2+) as a cofactor. Mn(2+) serves as cofactor.

The enzyme catalyses 5-phospho-beta-D-ribosylamine + glycine + ATP = N(1)-(5-phospho-beta-D-ribosyl)glycinamide + ADP + phosphate + H(+). Its pathway is purine metabolism; IMP biosynthesis via de novo pathway; N(1)-(5-phospho-D-ribosyl)glycinamide from 5-phospho-alpha-D-ribose 1-diphosphate: step 2/2. The chain is Phosphoribosylamine--glycine ligase from Staphylococcus epidermidis (strain ATCC 12228 / FDA PCI 1200).